We begin with the raw amino-acid sequence, 495 residues long: UDP-glycosyltransferase 73C11 (495 aa).

The Proton acceptor role is filled by His24. An an anthocyanidin-binding site is contributed by His24. Asp129 acts as the Charge relay in catalysis. UDP-alpha-D-glucose-binding residues include Gln358, His373, Trp376, Asn377, Ser378, and Glu381. Gly396 is a binding site for an anthocyanidin. UDP-alpha-D-glucose contacts are provided by Asp397 and Gln398.

The protein belongs to the UDP-glycosyltransferase family.

It catalyses the reaction oleanolate + UDP-alpha-D-glucose = oleanolate 3-O-beta-D-glucoside + UDP + H(+). Functionally, catalyzes the transfer of a glucose (Glc) moiety from UDP-Glc to the C-3 position of the oleanane sapogenins oleanolate and hederagenin, and to the C-28 carboxylic group of the lupane sapogenin betulinate. The monoglucosylated hederagenin 3-O-beta-D-glucoside is a feeding deterrent of the yellow-striped flea beetle (Phyllotreta nemorum). This is UDP-glycosyltransferase 73C11 from Barbarea vulgaris (Yellow rocket).